Here is a 90-residue protein sequence, read N- to C-terminus: Small ribosomal subunit protein uS17 (90 aa).

This sequence belongs to the universal ribosomal protein uS17 family. In terms of assembly, part of the 30S ribosomal subunit.

Functionally, one of the primary rRNA binding proteins, it binds specifically to the 5'-end of 16S ribosomal RNA. The protein is Small ribosomal subunit protein uS17 of Paraburkholderia phymatum (strain DSM 17167 / CIP 108236 / LMG 21445 / STM815) (Burkholderia phymatum).